Reading from the N-terminus, the 799-residue chain is MLRGQRHGQLGWHRPAAGLGGLVTSLMLACACAASCRETCCPVGPSGLRCTRAGTLNTLRGLRGAGNLTELYVENQRDLQRLEFEDLQGLGELRSLTIVKSGLRFVAPDAFHFTPRLSHLNLSSNALESLSWKTVQGLSLQDLTLSGNPLHCSCALLWLQRWEQEDLCGVYTQKLQGSGSGDQFLPLGHNNSCGVPSVKIQMPNDSVEVGDDVFLQCQVEGQALQQADWILTELEGTATMKKSGDLPSLGLTLVNVTSDLNKKNVTCWAENDVGRAEVSVQVSVSFPASVHLGKAVEQHHWCIPFSVDGQPAPSLRWFFNGSVLNETSFIFTQFLESALTNETMRHGCLRLNQPTHVNNGNYTLLAANPYGQAAASIMAAFMDNPFEFNPEDPIPVSFSPVDTNSTSRDPVEKKDETPFGVSVAVGLAVSAALFLSALLLVLNKCGQRSKFGINRPAVLAPEDGLAMSLHFMTLGGSSLSPTEGKGSGLQGHIMENPQYFSDTCVHHIKRQDIILKWELGEGAFGKVFLAECYNLLNDQDKMLVAVKALKETSENARQDFHREAELLTMLQHQHIVRFFGVCTEGGPLLMVFEYMRHGDLNRFLRSHGPDAKLLAGGEDVAPGPLGLGQLLAVASQVAAGMVYLASLHFVHRDLATRNCLVGQGLVVKIGDFGMSRDIYSTDYYRVGGRTMLPIRWMPPESILYRKFSTESDVWSFGVVLWEIFTYGKQPWYQLSNTEAIECITQGRELERPRACPPDVYAIMRGCWQREPQQRLSMKDVHARLQALAQAPPSYLDVLG.

The N-terminal stretch at 1–32 (MLRGQRHGQLGWHRPAAGLGGLVTSLMLACAC) is a signal peptide. Topologically, residues 33–418 (AASCRETCCP…DPVEKKDETP (386 aa)) are extracellular. Disulfide bonds link cysteine 36/cysteine 41 and cysteine 40/cysteine 50. The N-linked (GlcNAc...) asparagine glycan is linked to asparagine 67. 2 LRR repeats span residues 90–113 (LGEL…AFHF) and 116–137 (RLSH…TVQG). Residues asparagine 121, asparagine 190, asparagine 204, asparagine 255, asparagine 264, asparagine 320, asparagine 325, asparagine 341, asparagine 361, and asparagine 404 are each glycosylated (N-linked (GlcNAc...) asparagine). An LRRCT domain is found at 148–219 (NPLHCSCALL…GDDVFLQCQV (72 aa)). A disulfide bridge links cysteine 154 with cysteine 193. Ig-like C2-type domains follow at residues 196 to 285 (PSVK…VSVS) and 295 to 368 (AVEQ…LAAN). Disulfide bonds link cysteine 217–cysteine 267 and cysteine 302–cysteine 348. A helical membrane pass occupies residues 419–442 (FGVSVAVGLAVSAALFLSALLLVL). The Cytoplasmic portion of the chain corresponds to 443–799 (NKCGQRSKFG…APPSYLDVLG (357 aa)). Positions 472 to 493 (MTLGGSSLSPTEGKGSGLQGHI) are interaction with SQSTM1. Tyrosine 499 carries the phosphotyrosine; by autocatalysis modification. Residues 513 to 784 (IILKWELGEG…LSMKDVHARL (272 aa)) enclose the Protein kinase domain. Residues 519–527 (LGEGAFGKV) and lysine 547 contribute to the ATP site. The Proton acceptor role is filled by aspartate 653. Phosphotyrosine; by autocatalysis is present on residues tyrosine 679, tyrosine 683, tyrosine 684, and tyrosine 794.

This sequence belongs to the protein kinase superfamily. Tyr protein kinase family. Insulin receptor subfamily. As to quaternary structure, exists in a dynamic equilibrium between monomeric (low affinity) and dimeric (high affinity) structures. Homodimerization is induced by binding of a NGF dimer. Found in a complex, at least composed of KIDINS220, MAGI2, NTRK1 and RAPGEF2; the complex is mainly formed at late endosomes in a nerve growth factor (NGF)-dependent manner. Interacts with RAPGEF2; the interaction is strengthened after NGF stimulation. Interacts with SQSTM1; bridges NTRK1 to NGFR. Forms a ternary complex with NGFR and KIDINS220; this complex is affected by the expression levels of KIDINS220 and an increase in KIDINS220 expression leads to a decreased association of NGFR and NTRK1. Interacts (phosphorylated upon activation by NGF) with SHC1; mediates SHC1 phosphorylation and activation. Interacts (phosphorylated upon activation by NGF) with PLCG1; mediates PLCG1 phosphorylation and activation. Interacts (phosphorylated) with SH2B1 and SH2B2. Interacts with GRB2. Interacts with PIK3R1. Interacts with FRS2. Interacts with SORT1; may regulate NTRK1 anterograde axonal transport. Interacts with SH2D1A; regulates NTRK1. Interacts with NRADD. Interacts with RAB7A. Interacts with PTPRS. Interacts with USP36; USP36 does not deubiquitinate NTRK1. Interacts with GGA3. Interacts with TSPAN1; this interaction promotes NTRK1 stability. In terms of processing, ligand-mediated autophosphorylation. Interaction with SQSTM1 is phosphotyrosine-dependent. Autophosphorylation at Tyr-499 mediates interaction and phosphorylation of SHC1. Post-translationally, N-glycosylated. Ubiquitinated. Undergoes polyubiquitination upon activation; regulated by NGFR. Ubiquitination by NEDD4L leads to degradation. Ubiquitination regulates the internalization of the receptor. In terms of tissue distribution, isoform Trka-II is primarily expressed in neuronal cells; isoform Trka-I is found in non-neuronal tissues.

The protein localises to the cell membrane. Its subcellular location is the early endosome membrane. It is found in the late endosome membrane. It localises to the recycling endosome membrane. The catalysed reaction is L-tyrosyl-[protein] + ATP = O-phospho-L-tyrosyl-[protein] + ADP + H(+). Its activity is regulated as follows. The pro-survival signaling effect of NTRK1 in neurons requires its endocytosis into signaling early endosomes and its retrograde axonal transport. This is regulated by different proteins including CFL1, RAC1 and SORT1. NTF3 is unable to induce this signaling probably due to the lability of the NTF3-NTRK1 complex in endosomes. SH2D1A inhibits the autophosphorylation of the receptor, and alters the recruitment and activation of downstream effectors and signaling cascades. Regulated by NGFR. Functionally, receptor tyrosine kinase involved in the development and the maturation of the central and peripheral nervous systems through regulation of proliferation, differentiation and survival of sympathetic and nervous neurons. High affinity receptor for NGF which is its primary ligand. Can also bind and be activated by NTF3/neurotrophin-3. However, NTF3 only supports axonal extension through NTRK1 but has no effect on neuron survival. Upon dimeric NGF ligand-binding, undergoes homodimerization, autophosphorylation and activation. Recruits, phosphorylates and/or activates several downstream effectors including SHC1, FRS2, SH2B1, SH2B2 and PLCG1 that regulate distinct overlapping signaling cascades driving cell survival and differentiation. Through SHC1 and FRS2 activates a GRB2-Ras-MAPK cascade that regulates cell differentiation and survival. Through PLCG1 controls NF-Kappa-B activation and the transcription of genes involved in cell survival. Through SHC1 and SH2B1 controls a Ras-PI3 kinase-AKT1 signaling cascade that is also regulating survival. In absence of ligand and activation, may promote cell death, making the survival of neurons dependent on trophic factors. The chain is High affinity nerve growth factor receptor (Ntrk1) from Rattus norvegicus (Rat).